The sequence spans 448 residues: UDP-N-acetylmuramoyl-L-alanine--L-glutamate ligase (448 aa).

118–124 is a binding site for ATP; that stretch reads GSKGKST.

It belongs to the MurCDEF family. MurD2 subfamily.

Its subcellular location is the cytoplasm. It catalyses the reaction UDP-N-acetyl-alpha-D-muramoyl-L-alanine + L-glutamate + ATP = UDP-N-acetyl-alpha-D-muramoyl-L-alanyl-L-glutamate + ADP + phosphate + H(+). It participates in cell wall biogenesis; peptidoglycan biosynthesis. Functionally, cell wall formation. Catalyzes the addition of L-glutamate to the nucleotide precursor UDP-N-acetylmuramoyl-L-alanine. The sequence is that of UDP-N-acetylmuramoyl-L-alanine--L-glutamate ligase from Salinispora tropica (strain ATCC BAA-916 / DSM 44818 / JCM 13857 / NBRC 105044 / CNB-440).